The primary structure comprises 374 residues: Lactoyl-CoA dehydratase subunit beta (374 aa).

The protein belongs to the FldB/FldC dehydratase alpha/beta subunit family. As to quaternary structure, heterodimer of an alpha (LcdA) and a beta (LcdB) subunit. It depends on [4Fe-4S] cluster as a cofactor. FMN is required as a cofactor. Requires riboflavin as cofactor. Mg(2+) serves as cofactor.

The catalysed reaction is (R)-lactoyl-CoA = acryloyl-CoA + H2O. The enzyme catalyses (2R)-hydroxybutanoyl-CoA = (2E)-butenoyl-CoA + H2O. Activated by the LcdC protein. Its function is as follows. Involved in the acrylate pathway for the conversion of D-lactic acid to propionic acid. Catalyzes the reversible dehydration of Lactoyl-CoA and 2-hydroxybutyroyl-CoA to acryloyl-CoA and crotonyl-CoA, respectively. The sequence is that of Lactoyl-CoA dehydratase subunit beta (lcdB) from Anaerotignum propionicum (Clostridium propionicum).